Here is a 317-residue protein sequence, read N- to C-terminus: Melanocyte-stimulating hormone receptor (317 aa).

Residues 1–37 (MAVQGSQRRLLGSLNSTPTAIPQLGLAANQTGARCLE) are Extracellular-facing. N-linked (GlcNAc...) asparagine glycosylation is present at N29. A helical membrane pass occupies residues 38-63 (VSIPDGLFLSLGLVSLVENMLVVATI). Over 64–72 (AKNRNLHSP) the chain is Cytoplasmic. Residues 73 to 93 (MYCFICCLALSDLLVSGSNVL) form a helical membrane-spanning segment. Residues 94-118 (ETAVILLLEAGALVARAAVLQQVDN) are Extracellular-facing. Residues 119–140 (VIDVITCSSMLSSLCFLGAIAV) form a helical membrane-spanning segment. The Cytoplasmic segment spans residues 141–163 (DRYISIFYALRYHSIVTLPRARR). A helical transmembrane segment spans residues 164–183 (AIAAIWVASVLFSTLFIAYC). Residues 184–191 (DHTAVLLC) are Extracellular-facing. A helical transmembrane segment spans residues 192-211 (LVVFFLAVLVLMAVLYVHML). The Cytoplasmic segment spans residues 212-240 (ARACQHAQGIARLHKRQRPVHQGFGLKGA). The helical transmembrane segment at 241–266 (VTLTILLGIFFLCWGPFFLHLTLIVL) threads the bilayer. Topologically, residues 267-279 (CPEHPTCGCIFKN) are extracellular. The helical transmembrane segment at 280–300 (FNLFLALIICNAIIDPLIYAF) threads the bilayer. The Cytoplasmic segment spans residues 301–317 (HSQELRRTLKEVLTCSW). C315 is lipidated: S-palmitoyl cysteine.

It belongs to the G-protein coupled receptor 1 family. In terms of assembly, interacts with MGRN1, but does not undergo MGRN1-mediated ubiquitination; this interaction competes with GNAS-binding and thus inhibits agonist-induced cAMP production. Interacts with OPN3; the interaction results in a decrease in MC1R-mediated cAMP signaling and ultimately a decrease in melanin production in melanocytes.

Its subcellular location is the cell membrane. In terms of biological role, receptor for MSH (alpha, beta and gamma) and ACTH. The activity of this receptor is mediated by G proteins which activate adenylate cyclase. Mediates melanogenesis, the production of eumelanin (black/brown) and phaeomelanin (red/yellow), via regulation of cAMP signaling in melanocytes. In Pan troglodytes (Chimpanzee), this protein is Melanocyte-stimulating hormone receptor (MC1R).